Consider the following 112-residue polypeptide: T cell receptor alpha variable 30 (112 aa).

The signal sequence occupies residues 1-21 (METLLKVLSGTLLWQLTWVRS). The 89-residue stretch at 24–112 (PVQSPQAVIL…YSGTYFCGTE (89 aa)) folds into the Ig-like domain. Asn42 carries an N-linked (GlcNAc...) asparagine glycan. The cysteines at positions 43 and 109 are disulfide-linked.

As to quaternary structure, alpha-beta TR is a heterodimer composed of an alpha and beta chain; disulfide-linked. The alpha-beta TR is associated with the transmembrane signaling CD3 coreceptor proteins to form the TR-CD3 (TcR or TCR). The assembly of alpha-beta TR heterodimers with CD3 occurs in the endoplasmic reticulum where a single alpha-beta TR heterodimer associates with one CD3D-CD3E heterodimer, one CD3G-CD3E heterodimer and one CD247 homodimer forming a stable octameric structure. CD3D-CD3E and CD3G-CD3E heterodimers preferentially associate with TR alpha and TR beta chains, respectively. The association of the CD247 homodimer is the last step of TcR assembly in the endoplasmic reticulum and is required for transport to the cell surface.

It localises to the cell membrane. In terms of biological role, v region of the variable domain of T cell receptor (TR) alpha chain that participates in the antigen recognition. Alpha-beta T cell receptors are antigen specific receptors which are essential to the immune response and are present on the cell surface of T lymphocytes. Recognize peptide-major histocompatibility (MH) (pMH) complexes that are displayed by antigen presenting cells (APC), a prerequisite for efficient T cell adaptive immunity against pathogens. Binding of alpha-beta TR to pMH complex initiates TR-CD3 clustering on the cell surface and intracellular activation of LCK that phosphorylates the ITAM motifs of CD3G, CD3D, CD3E and CD247 enabling the recruitment of ZAP70. In turn ZAP70 phosphorylates LAT, which recruits numerous signaling molecules to form the LAT signalosome. The LAT signalosome propagates signal branching to three major signaling pathways, the calcium, the mitogen-activated protein kinase (MAPK) kinase and the nuclear factor NF-kappa-B (NF-kB) pathways, leading to the mobilization of transcription factors that are critical for gene expression and essential for T cell growth and differentiation. The T cell repertoire is generated in the thymus, by V-(D)-J rearrangement. This repertoire is then shaped by intrathymic selection events to generate a peripheral T cell pool of self-MH restricted, non-autoaggressive T cells. Post-thymic interaction of alpha-beta TR with the pMH complexes shapes TR structural and functional avidity. This chain is T cell receptor alpha variable 30, found in Homo sapiens (Human).